A 217-amino-acid chain; its full sequence is Phosphatidylserine decarboxylase proenzyme (217 aa).

Ser183 serves as the catalytic Schiff-base intermediate with substrate; via pyruvic acid. Ser183 is subject to Pyruvic acid (Ser); by autocatalysis.

This sequence belongs to the phosphatidylserine decarboxylase family. PSD-A subfamily. In terms of assembly, heterodimer of a large membrane-associated beta subunit and a small pyruvoyl-containing alpha subunit. Requires pyruvate as cofactor. In terms of processing, is synthesized initially as an inactive proenzyme. Formation of the active enzyme involves a self-maturation process in which the active site pyruvoyl group is generated from an internal serine residue via an autocatalytic post-translational modification. Two non-identical subunits are generated from the proenzyme in this reaction, and the pyruvate is formed at the N-terminus of the alpha chain, which is derived from the carboxyl end of the proenzyme. The post-translation cleavage follows an unusual pathway, termed non-hydrolytic serinolysis, in which the side chain hydroxyl group of the serine supplies its oxygen atom to form the C-terminus of the beta chain, while the remainder of the serine residue undergoes an oxidative deamination to produce ammonia and the pyruvoyl prosthetic group on the alpha chain.

Its subcellular location is the cell membrane. It carries out the reaction a 1,2-diacyl-sn-glycero-3-phospho-L-serine + H(+) = a 1,2-diacyl-sn-glycero-3-phosphoethanolamine + CO2. The protein operates within phospholipid metabolism; phosphatidylethanolamine biosynthesis; phosphatidylethanolamine from CDP-diacylglycerol: step 2/2. Functionally, catalyzes the formation of phosphatidylethanolamine (PtdEtn) from phosphatidylserine (PtdSer). This chain is Phosphatidylserine decarboxylase proenzyme, found in Cupriavidus metallidurans (strain ATCC 43123 / DSM 2839 / NBRC 102507 / CH34) (Ralstonia metallidurans).